The following is a 257-amino-acid chain: 5-oxoprolinase subunit A (257 aa).

The protein belongs to the LamB/PxpA family. Forms a complex composed of PxpA, PxpB and PxpC.

The catalysed reaction is 5-oxo-L-proline + ATP + 2 H2O = L-glutamate + ADP + phosphate + H(+). Catalyzes the cleavage of 5-oxoproline to form L-glutamate coupled to the hydrolysis of ATP to ADP and inorganic phosphate. The sequence is that of 5-oxoprolinase subunit A from Natranaerobius thermophilus (strain ATCC BAA-1301 / DSM 18059 / JW/NM-WN-LF).